The primary structure comprises 388 residues: Ribosomal RNA large subunit methyltransferase F (388 aa).

The segment covering 1-22 (MKTNNHNAKQAQTKTAKSNPSK) has biased composition (polar residues). The disordered stretch occupies residues 1–51 (MKTNNHNAKQAQTKTAKSNPSKEVTKIKPKRVKNKPTAKAAKSTGLKTNAA). The span at 27-36 (IKPKRVKNKP) shows a compositional bias: basic residues.

It belongs to the methyltransferase superfamily. METTL16/RlmF family.

The protein localises to the cytoplasm. The catalysed reaction is adenosine(1618) in 23S rRNA + S-adenosyl-L-methionine = N(6)-methyladenosine(1618) in 23S rRNA + S-adenosyl-L-homocysteine + H(+). Specifically methylates the adenine in position 1618 of 23S rRNA. This chain is Ribosomal RNA large subunit methyltransferase F, found in Vibrio campbellii (strain ATCC BAA-1116).